A 421-amino-acid chain; its full sequence is Synaptotagmin-1 (421 aa).

Residues 1–57 (MVSASHPEALAAPVTTVATLVPHNATEPASPGEGKEDAFSKLKQKFMNELHKIPLPP) lie on the Vesicular side of the membrane. The N-linked (GlcNAc...) asparagine glycan is linked to asparagine 24. The helical transmembrane segment at 58-79 (WALIAIAIVAVLLVVTCCFCVC) threads the bilayer. S-palmitoyl cysteine attachment occurs at residues cysteine 74, cysteine 75, cysteine 77, cysteine 79, and cysteine 82. Residues 80 to 421 (KKCLFKKKNK…EVDAMLAVKK (342 aa)) are Cytoplasmic-facing. The segment at 112 to 141 (TMKDQALKDDDAETGLTDGEEKEEPKEEEK) is disordered. Over residues 121–133 (DDAETGLTDGEEK) the composition is skewed to acidic residues. Phosphothreonine is present on threonine 128. The interval 135–381 (EPKEEEKLGK…AIGKVFVGYN (247 aa)) is phospholipid binding. Residues 141–260 (KLGKLQYSLD…DFGHVTEEWR (120 aa)) enclose the C2 1 domain. Ca(2+)-binding residues include leucine 171, aspartate 172, and aspartate 178. The residue at position 229 (tyrosine 229) is a Phosphotyrosine. Ca(2+) contacts are provided by aspartate 230, phenylalanine 231, aspartate 232, serine 235, lysine 236, and aspartate 238. Serine 264 bears the Phosphoserine mark. The 134-residue stretch at 272-405 (KLGDICFSLR…NPRRPIAQWH (134 aa)) folds into the C2 2 domain. Aspartate 303 and aspartate 309 together coordinate Ca(2+). Serine 342 and serine 344 each carry phosphoserine. 3 residues coordinate Ca(2+): aspartate 363, aspartate 365, and aspartate 371.

Belongs to the synaptotagmin family. As to quaternary structure, homotetramer. Heterodimer; heterodimerizes with SYT2 in presence of calcium. Interacts with SCAMP5. Interacts with STON2. Forms a complex with SV2B, syntaxin 1 and SNAP25. Interacts with SV2A, SV2B and SV2C. Interacts with RIMS1. Interacts with PRRT2. Interacts with DNAJC5 in a phosphorylation-dependent manner. Interacts (via N-terminus) with RAB3A. Interacts with SYT12. Interacts with calmodulin. Interacts with DNM1 (via C-terminal proline-rich domain (PRD)); this interaction facilitates vesicle fission during clathrin-mediated endocytosis (CME). (Microbial infection) Interacts with C.botulinum neurotoxin type B (BoNT/B, botB). Has lower affinity for BoNT/B than Syt2; mutating its residues to match those in Syt2 increases its affinity. In terms of assembly, (Microbial infection) Interacts with C.botulinum neurotoxin type G (BoNT/G, botG). It depends on Ca(2+) as a cofactor. In terms of processing, glycosylated. Expressed in the brain (at protein level). Predominantly expressed in rostral, phylogenetically younger brain regions, and in some endocrine tissues.

It is found in the cytoplasmic vesicle. The protein localises to the secretory vesicle membrane. The protein resides in the secretory vesicle. Its subcellular location is the synaptic vesicle membrane. It localises to the chromaffin granule membrane. It is found in the cytoplasm. Calcium sensor that participates in triggering neurotransmitter release at the synapse. May have a regulatory role in the membrane interactions during trafficking of synaptic vesicles at the active zone of the synapse. It binds acidic phospholipids with a specificity that requires the presence of both an acidic head group and a diacyl backbone. A Ca(2+)-dependent interaction between synaptotagmin and putative receptors for activated protein kinase C has also been reported. It can bind to at least three additional proteins in a Ca(2+)-independent manner; these are neurexins, syntaxin and AP2. Plays a role in dendrite formation by melanocytes. Its function is as follows. (Microbial infection) Receptor for C.botulinum neurotoxin type B (BoNT/B, botB); interaction is improved in the presence of gangliosides. BoNT/B toxin binds to the membrane proximal vesicular domain of Syt1 (residues 32-51). Functionally, (Microbial infection) Receptor for C.botulinum neurotoxin type G (BoNT/G, botG); unlike the case with BoNT/B, interaction is not improved in the presence of gangliosides. BoNT/G toxin binds to the vesicular domain of Syt1 (residues 32-53). This is Synaptotagmin-1 from Rattus norvegicus (Rat).